The primary structure comprises 580 residues: Aspartate--tRNA ligase (580 aa).

Glu-173 contacts L-aspartate. The aspartate stretch occupies residues Gln-195–Lys-198. Arg-217 lines the L-aspartate pocket. ATP-binding positions include Arg-217–Glu-219 and Gln-226. His-443 provides a ligand contact to L-aspartate. Glu-477 serves as a coordination point for ATP. Position 484 (Arg-484) interacts with L-aspartate. Gly-529–Arg-532 serves as a coordination point for ATP.

The protein belongs to the class-II aminoacyl-tRNA synthetase family. Type 1 subfamily. As to quaternary structure, homodimer.

Its subcellular location is the cytoplasm. It carries out the reaction tRNA(Asp) + L-aspartate + ATP = L-aspartyl-tRNA(Asp) + AMP + diphosphate. Functionally, catalyzes the attachment of L-aspartate to tRNA(Asp) in a two-step reaction: L-aspartate is first activated by ATP to form Asp-AMP and then transferred to the acceptor end of tRNA(Asp). The chain is Aspartate--tRNA ligase from Malacoplasma penetrans (strain HF-2) (Mycoplasma penetrans).